Here is a 391-residue protein sequence, read N- to C-terminus: FLUCTUATING-LIGHT-ACCLIMATION protein 1, chloroplastic (391 aa).

The N-terminal 48 residues, 1–48 (MASSSTFLELTPFQWNQPLPYTQRPHHRTVLLYSKPQRRSNSIRLQIS), are a transit peptide targeting the chloroplast. Residues 87–107 (AIAAVLLGLLLFYDPNSALAA) form a helical membrane-spanning segment. Residues 116 to 138 (SFSSRSRSSSSSSSQSYSVPRTS) are compositionally biased toward low complexity. Positions 116-140 (SFSSRSRSSSSSSSQSYSVPRTSNP) are disordered. Helical transmembrane passes span 168-188 (FGFGGFSSFSLILVGFAAFVL) and 321-341 (YIVVTILMAAEGIHKLPPING).

Belongs to the FLAP family.

The protein resides in the plastid. It is found in the chloroplast thylakoid membrane. Its subcellular location is the chloroplast membrane. It localises to the chloroplast envelope. Its function is as follows. Monitors proton H(+) homeostasis in chloroplasts to manipulate luminal acidification levels appropriately to balance photoprotection and photochemical processes. Required during acclimation response to fluctuating light (e.g. photosynthetic activity optimization) by controlling non-photochemical quenching (NPQ); acts independently from DLDG1. This chain is FLUCTUATING-LIGHT-ACCLIMATION protein 1, chloroplastic, found in Arabidopsis thaliana (Mouse-ear cress).